We begin with the raw amino-acid sequence, 385 residues long: MGLVTCKQEREAELQNRQIDTQIRIENQANKRKIKMLLLGVTDSGKSTIVKQMRVNYLDGFNETEVVNAIFVIRNNIIDAFKNICNIILHSDITVTQEEKVLVKLFAYESGKIELMQEVDELNVINAVSGYECIKQFFERFAFHPMVPDHIHYFYPNLDRIASSNYVPTAEDLIHMRQTTLGVHEISFDYTKHIIRLIDVGGQKTERRKWIHFFEGVTAVMFVCSLASFNQTTEEEPKAFVWESSLNKVQNKVLVRSAGKAKVEKPGLINRLDESVDLFKSIRENSFLKMSNFMLFLNKKDLLTKKLTKVVFSDYFPDYKKWITNDNSDVSVAEFIENMFREGLEPEKRMYAHLTQATVTANIEGTFALCCDVIFGKNYEDTNLE.

G2 carries N-myristoyl glycine lipidation. C6 carries the S-palmitoyl cysteine lipid modification. The G-alpha domain maps to 32 to 385; sequence RKIKMLLLGV…GKNYEDTNLE (354 aa). The segment at 35 to 48 is G1 motif; sequence KMLLLGVTDSGKST. Residues 40-47, 174-180, 199-203, 298-301, and A357 contribute to the GTP site; these read GVTDSGKS, IHMRQTT, DVGGQ, and NKKD. Residues S47 and T180 each coordinate Mg(2+). The segment at 172 to 180 is G2 motif; it reads DLIHMRQTT. Residues 195 to 204 form a G3 motif region; sequence IRLIDVGGQK. Positions 294-301 are G4 motif; the sequence is MLFLNKKD. The tract at residues 355-360 is G5 motif; it reads TQATVT.

It belongs to the G-alpha family. G proteins are composed of 3 units; alpha, beta and gamma. The alpha chain contains the guanine nucleotide binding site.

Guanine nucleotide-binding proteins (G proteins) are involved as modulators or transducers in various transmembrane signaling systems. The protein is Guanine nucleotide-binding protein alpha-5 subunit (gpa-5) of Caenorhabditis elegans.